The sequence spans 116 residues: Alpha-amylase inhibitor 5 (116 aa).

Disulfide bonds link C4-C55, C18-C44, C27-C77, C45-C95, and C57-C106.

The protein belongs to the protease inhibitor I6 (cereal trypsin/alpha-amylase inhibitor) family.

The protein resides in the secreted. Functionally, alpha-amylase inhibitor. This chain is Alpha-amylase inhibitor 5, found in Sorghum bicolor (Sorghum).